A 730-amino-acid chain; its full sequence is MRKMRIYEYAKEKNLSSKEVIEKLKGLNVHVSNHMSVIDEKTITLLEGNGNQKQGGSGKPEQQKKAGEKKPAQDHGQRKPNTAPAKANNQHDRSQGSDQQKGKAQDGGQKPKHKGNKNKKQHQKNNNNKRNQRGRGRQPEMNKAKPLPEKVTFSGSLTVGELAEKLNKEPSELIKKLMFLGVMATINQELDKDSIELICEDYGVEVEEEVIIDETDIESYVVEDDPSLLKERPPVVTIMGHVDHGKTTLLDSIRNTKVTEGEAGGITQHIGAYQVTVEGKKITFLDTPGHAAFTTMRARGAQVTDITILVVAADDGVMPQTKEAISHAKAAGVPIIVAVNKMDKETANPDRVMQELTEYELVPEAWGGETIFVNVSALTGTGIDELLEMVLLVAEVEELKANPDRLARGTVIEAELDKGRGPVATLLVQSGTLKVGDPIVVGSTFGRVRAMVNDEGRRVKAVGPSTPVEITGLNDVPQAGDQFQAFADEKKARSIGEARATRQKEEERAETSKVSLDDLFNQIQQGEVKEINVIIKADVQGSVEAMRGSLEKIDVEGVKINIIHTGVGAITESDIILAAASNAIVIGFNVRPDGGAKRTAEQEKVDIRLHRVIYNAIEEIEAAMKGMLDPEYEEKIIGQVEVRTTFKVSRIGTIAGSYVTEGKIVRDATVRLIRDGVVIYEGSINALKRFKDDVKEVAQGYECGITLENFNDIKEGDIIEAYVMEEIERT.

Residues 48–151 (GNGNQKQGGS…NKAKPLPEKV (104 aa)) form a disordered region. Basic and acidic residues-rich tracts occupy residues 61 to 77 (EQQK…DHGQ) and 89 to 104 (NQHD…KGKA). Positions 110–123 (KPKHKGNKNKKQHQ) are enriched in basic residues. A compositionally biased stretch (basic and acidic residues) spans 137–148 (RQPEMNKAKPLP). The region spanning 231 to 400 (ERPPVVTIMG…LLVAEVEELK (170 aa)) is the tr-type G domain. Residues 240 to 247 (GHVDHGKT) form a G1 region. Residue 240-247 (GHVDHGKT) coordinates GTP. Residues 265-269 (GITQH) are G2. Residues 286 to 289 (DTPG) form a G3 region. GTP-binding positions include 286–290 (DTPGH) and 340–343 (NKMD). Residues 340–343 (NKMD) form a G4 region. The interval 376-378 (SAL) is G5.

It belongs to the TRAFAC class translation factor GTPase superfamily. Classic translation factor GTPase family. IF-2 subfamily.

The protein resides in the cytoplasm. Its function is as follows. One of the essential components for the initiation of protein synthesis. Protects formylmethionyl-tRNA from spontaneous hydrolysis and promotes its binding to the 30S ribosomal subunits. Also involved in the hydrolysis of GTP during the formation of the 70S ribosomal complex. The chain is Translation initiation factor IF-2 from Halalkalibacterium halodurans (strain ATCC BAA-125 / DSM 18197 / FERM 7344 / JCM 9153 / C-125) (Bacillus halodurans).